Reading from the N-terminus, the 499-residue chain is Dipeptide and tripeptide permease A (499 aa).

At 1 to 34 (MSTANKKPAESVSMNAFKQPRSFYLIFSIELWER) the chain is on the cytoplasmic side. A helical membrane pass occupies residues 35–55 (FGFYGLQGIMAVYLVKQLGMS). Residues 56–59 (EADS) lie on the Periplasmic side of the membrane. The chain crosses the membrane as a helical span at residues 60–80 (ITLFSSFSALVYGLVAIGGWL). At 81–89 (GDKVLGTKR) the chain is on the cytoplasmic side. A helical transmembrane segment spans residues 90-110 (VIMLGTIVLAIGYALVAWSGH). Residue Asp-111 is a topological domain, periplasmic. A helical membrane pass occupies residues 112 to 132 (AAIVYFGMATIAVGNGLFKAN). Residues 133-153 (PSALLSTCYEKDDPRLDGAFT) are Cytoplasmic-facing. A helical transmembrane segment spans residues 154-174 (MYYMAINIGSFFSMLATPWLA). The Periplasmic segment spans residues 175–178 (EKFG). A helical membrane pass occupies residues 179 to 199 (WSVAFSLSFVGMLITLVNFIF). The Cytoplasmic portion of the chain corresponds to 200-217 (CKKWVKDYGSKPDFAPLH). A helical membrane pass occupies residues 218-238 (VGKLLATIVGIVVLVAIATWL). The Periplasmic segment spans residues 239–246 (LHNQGIAR). Residues 247–267 (LVLGVVALGIVIIFAKEAFAM) form a helical membrane-spanning segment. The Cytoplasmic portion of the chain corresponds to 268-274 (QGAARRK). The chain crosses the membrane as a helical span at residues 275-295 (MIVAFILMLEAIVFFVLYQQM). The Periplasmic segment spans residues 296-320 (PTSLNFFAIRNVEHSILGIAFQPEQ). The chain crosses the membrane as a helical span at residues 321–341 (FQALNPFWIMIGSPILAAIYN). At 342–350 (KMGDRLPMP) the chain is on the cytoplasmic side. A helical transmembrane segment spans residues 351 to 371 (FKFTIGMLLCSGAFLVLPLGA). Residues 372 to 383 (KFASEAGIVSVN) lie on the Periplasmic side of the membrane. Residues 384–404 (WLILSYALQSIGELMISGLGL) form a helical membrane-spanning segment. Residues 405–414 (AMVAQLVPQR) lie on the Cytoplasmic side of the membrane. The chain crosses the membrane as a helical span at residues 415–435 (LMGFIMGSWFLTTAGAAMIAG). Residues 436 to 459 (KVANLMAVPENVSDPLQSLEVYGR) lie on the Periplasmic side of the membrane. Residues 460–480 (VFMQIGIATGVIAVLMLLTAP) form a helical membrane-spanning segment. The Cytoplasmic segment spans residues 481–499 (LLNRMTQEDKPKETDTAHA).

Belongs to the major facilitator superfamily. Proton-dependent oligopeptide transporter (POT/PTR) (TC 2.A.17) family. DtpA subfamily.

The protein localises to the cell inner membrane. In terms of biological role, proton-dependent permease that transports di- and tripeptides. The polypeptide is Dipeptide and tripeptide permease A (Cronobacter turicensis (strain DSM 18703 / CCUG 55852 / LMG 23827 / z3032)).